Reading from the N-terminus, the 337-residue chain is Fructose-1,6-bisphosphatase class 1 (337 aa).

Residues glutamate 94, aspartate 116, leucine 118, and aspartate 119 each coordinate Mg(2+). Substrate contacts are provided by residues 119–122 (DGSS), asparagine 210, and lysine 276. Position 282 (glutamate 282) interacts with Mg(2+).

The protein belongs to the FBPase class 1 family. Homotetramer. The cofactor is Mg(2+).

It is found in the cytoplasm. The catalysed reaction is beta-D-fructose 1,6-bisphosphate + H2O = beta-D-fructose 6-phosphate + phosphate. The protein operates within carbohydrate biosynthesis; gluconeogenesis. This chain is Fructose-1,6-bisphosphatase class 1, found in Burkholderia orbicola (strain MC0-3).